We begin with the raw amino-acid sequence, 428 residues long: Dihydroorotase (428 aa).

Zn(2+) is bound by residues His59 and His61. Substrate-binding positions include 61-63 and Asn93; that span reads HLR. The Zn(2+) site is built by Asp151, His178, and His231. Position 277 (Asn277) interacts with substrate. Asp304 contributes to the Zn(2+) binding site. The active site involves Asp304. Substrate-binding positions include His308 and 322–323; that span reads FG.

This sequence belongs to the metallo-dependent hydrolases superfamily. DHOase family. Class I DHOase subfamily. The cofactor is Zn(2+).

It carries out the reaction (S)-dihydroorotate + H2O = N-carbamoyl-L-aspartate + H(+). Its pathway is pyrimidine metabolism; UMP biosynthesis via de novo pathway; (S)-dihydroorotate from bicarbonate: step 3/3. Catalyzes the reversible cyclization of carbamoyl aspartate to dihydroorotate. This is Dihydroorotase from Bacillus cereus (strain ATCC 10987 / NRS 248).